The following is a 124-amino-acid chain: Fluoride-specific ion channel FluC 2 (124 aa).

Helical transmembrane passes span 1–21 (MSDI…RFQI), 34–54 (FLIL…LSLV), 66–86 (LILF…SFVY), and 103–123 (LFII…FLGT). Gly76 and Ser79 together coordinate Na(+).

It belongs to the fluoride channel Fluc/FEX (TC 1.A.43) family.

It is found in the cell inner membrane. It carries out the reaction fluoride(in) = fluoride(out). With respect to regulation, na(+) is not transported, but it plays an essential structural role and its presence is essential for fluoride channel function. Fluoride-specific ion channel. Important for reducing fluoride concentration in the cell, thus reducing its toxicity. This is Fluoride-specific ion channel FluC 2 from Prochlorococcus marinus (strain NATL2A).